Here is a 250-residue protein sequence, read N- to C-terminus: Global transcriptional regulator CodY (250 aa).

Residues 1-147 (MSTLLEKTRK…GATVVGLEIL (147 aa)) are GAF domain. Positions 195–214 (ASKIADKVGITRSVIVNALR) form a DNA-binding region, H-T-H motif.

It belongs to the CodY family.

It is found in the cytoplasm. Its function is as follows. DNA-binding global transcriptional regulator which is involved in the adaptive response to starvation and acts by directly or indirectly controlling the expression of numerous genes in response to nutrient availability. During rapid exponential growth, CodY is highly active and represses genes whose products allow adaptation to nutrient depletion. This chain is Global transcriptional regulator CodY, found in Thermoanaerobacter sp. (strain X514).